A 101-amino-acid polypeptide reads, in one-letter code: Small ribosomal subunit protein bS16 (101 aa).

It belongs to the bacterial ribosomal protein bS16 family.

The sequence is that of Small ribosomal subunit protein bS16 from Ureaplasma parvum serovar 3 (strain ATCC 700970).